The primary structure comprises 161 residues: Phosphopantetheine adenylyltransferase (161 aa).

Ser11 contributes to the substrate binding site. ATP is bound by residues 11-12 and His19; that span reads SF. The substrate site is built by Lys43, Leu75, and Arg89. ATP is bound by residues 90–92, Glu100, and 125–131; these read GLR and YSFISSS.

This sequence belongs to the bacterial CoaD family. In terms of assembly, homohexamer. Mg(2+) is required as a cofactor.

The protein localises to the cytoplasm. It carries out the reaction (R)-4'-phosphopantetheine + ATP + H(+) = 3'-dephospho-CoA + diphosphate. The protein operates within cofactor biosynthesis; coenzyme A biosynthesis; CoA from (R)-pantothenate: step 4/5. Its function is as follows. Reversibly transfers an adenylyl group from ATP to 4'-phosphopantetheine, yielding dephospho-CoA (dPCoA) and pyrophosphate. The polypeptide is Phosphopantetheine adenylyltransferase (Staphylococcus carnosus (strain TM300)).